The primary structure comprises 222 residues: 2-C-methyl-D-erythritol 4-phosphate cytidylyltransferase (222 aa).

Belongs to the IspD/TarI cytidylyltransferase family. IspD subfamily.

The catalysed reaction is 2-C-methyl-D-erythritol 4-phosphate + CTP + H(+) = 4-CDP-2-C-methyl-D-erythritol + diphosphate. Its pathway is isoprenoid biosynthesis; isopentenyl diphosphate biosynthesis via DXP pathway; isopentenyl diphosphate from 1-deoxy-D-xylulose 5-phosphate: step 2/6. Catalyzes the formation of 4-diphosphocytidyl-2-C-methyl-D-erythritol from CTP and 2-C-methyl-D-erythritol 4-phosphate (MEP). This is 2-C-methyl-D-erythritol 4-phosphate cytidylyltransferase from Thermotoga petrophila (strain ATCC BAA-488 / DSM 13995 / JCM 10881 / RKU-1).